Here is a 294-residue protein sequence, read N- to C-terminus: DNA adenine methyltransferase YhdJ (294 aa).

The interval 275 to 294 is disordered; that stretch reads TGNLSKRSRLSEVDPDLITK. A compositionally biased stretch (basic and acidic residues) spans 283-294; that stretch reads RLSEVDPDLITK.

The protein belongs to the N(4)/N(6)-methyltransferase family.

It carries out the reaction a 2'-deoxyadenosine in DNA + S-adenosyl-L-methionine = an N(6)-methyl-2'-deoxyadenosine in DNA + S-adenosyl-L-homocysteine + H(+). In terms of biological role, a beta subtype methylase, recognizes the double-stranded sequence 5'-ATGCAT-3' and methylates A-5. The chain is DNA adenine methyltransferase YhdJ (yhdJ) from Escherichia coli (strain K12).